A 411-amino-acid polypeptide reads, in one-letter code: Arginine deiminase (411 aa).

Catalysis depends on Cys-401, which acts as the Amidino-cysteine intermediate.

Belongs to the arginine deiminase family.

Its subcellular location is the cytoplasm. The enzyme catalyses L-arginine + H2O = L-citrulline + NH4(+). Its pathway is amino-acid degradation; L-arginine degradation via ADI pathway; carbamoyl phosphate from L-arginine: step 1/2. This is Arginine deiminase from Streptococcus pyogenes serotype M49 (strain NZ131).